Here is a 260-residue protein sequence, read N- to C-terminus: Adenosylcobinamide-GDP ribazoletransferase (260 aa).

Transmembrane regions (helical) follow at residues 40–60 (AFPLAGAVLGLLAGAVLFMAY), 64–84 (LPPLACAMLAIGALAAMTGAL), 117–137 (FAALTLIVFVGLKAALLMTII), 192–212 (GIGLAFLVFTLIPAGGFLSLI), 214–234 (ALVLATGLLFGFARLCIAKIG), and 240–260 (TLGAAQQIGSVAVLAGLVMAL).

It belongs to the CobS family. It depends on Mg(2+) as a cofactor.

The protein resides in the cell inner membrane. The catalysed reaction is alpha-ribazole + adenosylcob(III)inamide-GDP = adenosylcob(III)alamin + GMP + H(+). It catalyses the reaction alpha-ribazole 5'-phosphate + adenosylcob(III)inamide-GDP = adenosylcob(III)alamin 5'-phosphate + GMP + H(+). It functions in the pathway cofactor biosynthesis; adenosylcobalamin biosynthesis; adenosylcobalamin from cob(II)yrinate a,c-diamide: step 7/7. Its function is as follows. Joins adenosylcobinamide-GDP and alpha-ribazole to generate adenosylcobalamin (Ado-cobalamin). Also synthesizes adenosylcobalamin 5'-phosphate from adenosylcobinamide-GDP and alpha-ribazole 5'-phosphate. This chain is Adenosylcobinamide-GDP ribazoletransferase, found in Brucella anthropi (strain ATCC 49188 / DSM 6882 / CCUG 24695 / JCM 21032 / LMG 3331 / NBRC 15819 / NCTC 12168 / Alc 37) (Ochrobactrum anthropi).